A 187-amino-acid polypeptide reads, in one-letter code: Protein Flattop (187 aa).

Residues 97–187 (THSGHGIHTH…TPQLEREEPQ (91 aa)) form a disordered region. Residues 122-131 (EGDQTCNAPT) are compositionally biased toward polar residues. Over residues 169 to 187 (KRREQSLEETPQLEREEPQ) the composition is skewed to basic and acidic residues.

This sequence belongs to the Flattop family.

It is found in the cytoplasm. It localises to the cytoskeleton. The protein localises to the cilium basal body. The protein resides in the cell projection. Its subcellular location is the cilium. It is found in the apical cell membrane. It localises to the cilium axoneme. Microtubule inner protein (MIP) part of the dynein-decorated doublet microtubules (DMTs) in cilia axoneme. Acts as a regulator of cilium basal body docking and positioning in mono- and multiciliated cells. Regulates basal body docking and cilia formation in multiciliated lung cells. Regulates kinocilium positioning and stereocilia bundle morphogenesis in the inner ear. The polypeptide is Protein Flattop (Salmo salar (Atlantic salmon)).